A 384-amino-acid polypeptide reads, in one-letter code: Probable tRNA sulfurtransferase (384 aa).

The 104-residue stretch at 57-160 folds into the THUMP domain; the sequence is EEVVDRVRNV…KKTYIYSKRI (104 aa). Residues 177-178, 202-203, R259, G281, and Q290 each bind ATP; these read ML and YF.

It belongs to the ThiI family.

Its subcellular location is the cytoplasm. The enzyme catalyses [ThiI sulfur-carrier protein]-S-sulfanyl-L-cysteine + a uridine in tRNA + 2 reduced [2Fe-2S]-[ferredoxin] + ATP + H(+) = [ThiI sulfur-carrier protein]-L-cysteine + a 4-thiouridine in tRNA + 2 oxidized [2Fe-2S]-[ferredoxin] + AMP + diphosphate. The catalysed reaction is [ThiS sulfur-carrier protein]-C-terminal Gly-Gly-AMP + S-sulfanyl-L-cysteinyl-[cysteine desulfurase] + AH2 = [ThiS sulfur-carrier protein]-C-terminal-Gly-aminoethanethioate + L-cysteinyl-[cysteine desulfurase] + A + AMP + 2 H(+). It functions in the pathway cofactor biosynthesis; thiamine diphosphate biosynthesis. Its function is as follows. Catalyzes the ATP-dependent transfer of a sulfur to tRNA to produce 4-thiouridine in position 8 of tRNAs, which functions as a near-UV photosensor. Also catalyzes the transfer of sulfur to the sulfur carrier protein ThiS, forming ThiS-thiocarboxylate. This is a step in the synthesis of thiazole, in the thiamine biosynthesis pathway. The sulfur is donated as persulfide by IscS. This chain is Probable tRNA sulfurtransferase, found in Clostridium acetobutylicum (strain ATCC 824 / DSM 792 / JCM 1419 / IAM 19013 / LMG 5710 / NBRC 13948 / NRRL B-527 / VKM B-1787 / 2291 / W).